Here is a 391-residue protein sequence, read N- to C-terminus: NADH-quinone oxidoreductase subunit D (391 aa).

It belongs to the complex I 49 kDa subunit family. As to quaternary structure, NDH-1 is composed of 14 different subunits. Subunits NuoB, C, D, E, F, and G constitute the peripheral sector of the complex.

The protein localises to the cell inner membrane. The enzyme catalyses a quinone + NADH + 5 H(+)(in) = a quinol + NAD(+) + 4 H(+)(out). Functionally, NDH-1 shuttles electrons from NADH, via FMN and iron-sulfur (Fe-S) centers, to quinones in the respiratory chain. The immediate electron acceptor for the enzyme in this species is believed to be ubiquinone. Couples the redox reaction to proton translocation (for every two electrons transferred, four hydrogen ions are translocated across the cytoplasmic membrane), and thus conserves the redox energy in a proton gradient. The chain is NADH-quinone oxidoreductase subunit D from Rickettsia rickettsii (strain Sheila Smith).